Consider the following 466-residue polypeptide: Adenosylhomocysteinase (466 aa).

Substrate-binding residues include Thr-57, Asp-132, and Glu-192. Position 193-195 (193-195) interacts with NAD(+); the sequence is TTT. The substrate site is built by Lys-222 and Asp-226. NAD(+)-binding positions include Asn-227, 256–261, Glu-279, Asn-314, 335–337, and Asn-380; these read GYGDVG and IGH.

This sequence belongs to the adenosylhomocysteinase family. NAD(+) is required as a cofactor.

It is found in the cytoplasm. It catalyses the reaction S-adenosyl-L-homocysteine + H2O = L-homocysteine + adenosine. The protein operates within amino-acid biosynthesis; L-homocysteine biosynthesis; L-homocysteine from S-adenosyl-L-homocysteine: step 1/1. Its function is as follows. May play a key role in the regulation of the intracellular concentration of adenosylhomocysteine. This is Adenosylhomocysteinase from Rhizobium etli (strain ATCC 51251 / DSM 11541 / JCM 21823 / NBRC 15573 / CFN 42).